The sequence spans 528 residues: D-3-phosphoglycerate dehydrogenase (528 aa).

Residues 151 to 152 (RI), aspartate 171, 230 to 232 (AAR), and aspartate 256 each bind NAD(+). Arginine 232 is a catalytic residue. Residue glutamate 261 is part of the active site. Histidine 279 functions as the Proton donor in the catalytic mechanism. Residue 279–282 (HLGA) participates in NAD(+) binding. Residues 455-527 (NLIIHYVDRP…DAYKLEVVDL (73 aa)) enclose the ACT domain.

The protein belongs to the D-isomer specific 2-hydroxyacid dehydrogenase family.

The catalysed reaction is (2R)-3-phosphoglycerate + NAD(+) = 3-phosphooxypyruvate + NADH + H(+). It carries out the reaction (R)-2-hydroxyglutarate + NAD(+) = 2-oxoglutarate + NADH + H(+). The protein operates within amino-acid biosynthesis; L-serine biosynthesis; L-serine from 3-phospho-D-glycerate: step 1/3. Its function is as follows. Catalyzes the reversible oxidation of 3-phospho-D-glycerate to 3-phosphonooxypyruvate, the first step of the phosphorylated L-serine biosynthesis pathway. Also catalyzes the reversible oxidation of 2-hydroxyglutarate to 2-oxoglutarate. In Mycobacterium bovis (strain ATCC BAA-935 / AF2122/97), this protein is D-3-phosphoglycerate dehydrogenase (serA).